Reading from the N-terminus, the 190-residue chain is Fe/S biogenesis protein NfuA (190 aa).

Residues cysteine 148 and cysteine 151 each contribute to the [4Fe-4S] cluster site.

It belongs to the NfuA family. In terms of assembly, homodimer. [4Fe-4S] cluster serves as cofactor.

Involved in iron-sulfur cluster biogenesis. Binds a 4Fe-4S cluster, can transfer this cluster to apoproteins, and thereby intervenes in the maturation of Fe/S proteins. Could also act as a scaffold/chaperone for damaged Fe/S proteins. The protein is Fe/S biogenesis protein NfuA of Baumannia cicadellinicola subsp. Homalodisca coagulata.